A 191-amino-acid polypeptide reads, in one-letter code: Protein GrpE (191 aa).

The protein belongs to the GrpE family. Homodimer.

It localises to the cytoplasm. Participates actively in the response to hyperosmotic and heat shock by preventing the aggregation of stress-denatured proteins, in association with DnaK and GrpE. It is the nucleotide exchange factor for DnaK and may function as a thermosensor. Unfolded proteins bind initially to DnaJ; upon interaction with the DnaJ-bound protein, DnaK hydrolyzes its bound ATP, resulting in the formation of a stable complex. GrpE releases ADP from DnaK; ATP binding to DnaK triggers the release of the substrate protein, thus completing the reaction cycle. Several rounds of ATP-dependent interactions between DnaJ, DnaK and GrpE are required for fully efficient folding. The protein is Protein GrpE of Helicobacter pylori (strain P12).